We begin with the raw amino-acid sequence, 530 residues long: Inactive ubiquitin carboxyl-terminal hydrolase 17-like protein 8 (530 aa).

In terms of domain architecture, USP spans 80-375; it reads AGLQNMGNTC…QAYVLFYIQK (296 aa). Residues 382 to 392 are compositionally biased toward basic and acidic residues; it reads SESVSRGREPR. Disordered regions lie at residues 382–412 and 493–530; these read SESVSRGREPRALGAEDTDRPATQGELKRDH and NSTDQESMNTGTLASLQGRTRRSKGKNKHSKRSLLVCQ. The segment covering 495–510 has biased composition (polar residues); it reads TDQESMNTGTLASLQG. Over residues 511–524 the composition is skewed to basic residues; that stretch reads RTRRSKGKNKHSKR.

The protein belongs to the peptidase C19 family. USP17 subfamily.

The protein resides in the nucleus. It is found in the endoplasmic reticulum. This is Inactive ubiquitin carboxyl-terminal hydrolase 17-like protein 8 (USP17L8) from Homo sapiens (Human).